We begin with the raw amino-acid sequence, 535 residues long: Thermosome subunit gamma (535 aa).

The protein belongs to the TCP-1 chaperonin family. As to quaternary structure, forms a Heterooligomeric complex of two stacked eight-membered rings.

Molecular chaperone; binds unfolded polypeptides in vitro, and has a weak ATPase activity. In Saccharolobus solfataricus (strain ATCC 35092 / DSM 1617 / JCM 11322 / P2) (Sulfolobus solfataricus), this protein is Thermosome subunit gamma (thsC).